The chain runs to 262 residues: GTP cyclohydrolase 1 type 2 homolog (262 aa).

A divalent metal cation-binding residues include histidine 65, aspartate 102, histidine 222, and glutamate 225.

This sequence belongs to the GTP cyclohydrolase I type 2/NIF3 family. As to quaternary structure, homohexamer.

This chain is GTP cyclohydrolase 1 type 2 homolog, found in Streptococcus pyogenes serotype M6 (strain ATCC BAA-946 / MGAS10394).